The sequence spans 279 residues: Undecaprenyl-diphosphatase (279 aa).

8 helical membrane-spanning segments follow: residues 1-21 (MVLE…LPIS), 39-59 (GRFF…LYFF), 96-116 (LLLV…VRFV), 128-148 (FTMG…DALF), 155-175 (IFQI…FAII), 201-221 (FSFL…LVAG), 231-251 (YSLI…SALL), and 259-279 (FVLF…VSFF).

It belongs to the UppP family.

It localises to the cell membrane. The enzyme catalyses di-trans,octa-cis-undecaprenyl diphosphate + H2O = di-trans,octa-cis-undecaprenyl phosphate + phosphate + H(+). Its function is as follows. Catalyzes the dephosphorylation of undecaprenyl diphosphate (UPP). Confers resistance to bacitracin. The protein is Undecaprenyl-diphosphatase of Tropheryma whipplei (strain TW08/27) (Whipple's bacillus).